The primary structure comprises 596 residues: Elongation factor 4 (596 aa).

The tr-type G domain maps to 2 to 184 (KNIRNFAIIA…SIVKYIPPPE (183 aa)). Residues 14 to 19 (DHGKST) and 131 to 134 (NKID) contribute to the GTP site.

The protein belongs to the TRAFAC class translation factor GTPase superfamily. Classic translation factor GTPase family. LepA subfamily.

It is found in the cell inner membrane. It catalyses the reaction GTP + H2O = GDP + phosphate + H(+). Required for accurate and efficient protein synthesis under certain stress conditions. May act as a fidelity factor of the translation reaction, by catalyzing a one-codon backward translocation of tRNAs on improperly translocated ribosomes. Back-translocation proceeds from a post-translocation (POST) complex to a pre-translocation (PRE) complex, thus giving elongation factor G a second chance to translocate the tRNAs correctly. Binds to ribosomes in a GTP-dependent manner. In Neorickettsia sennetsu (strain ATCC VR-367 / Miyayama) (Ehrlichia sennetsu), this protein is Elongation factor 4.